The following is a 148-amino-acid chain: Caltractin (148 aa).

4 consecutive EF-hand domains span residues 4–39 (EQKQ…LGFE), 40–75 (PKKE…KMGE), 77–112 (DSRE…LGEN), and 113–148 (LTDE…TSLF). The Ca(2+) site is built by aspartate 17, aspartate 19, serine 21, threonine 23, glutamate 28, aspartate 53, aspartate 55, serine 57, threonine 59, and glutamate 64. 5 residues coordinate Ca(2+): aspartate 126, aspartate 128, aspartate 130, glutamate 132, and glutamate 137.

It belongs to the centrin family. As to expression, ubiquitous.

Functionally, this calcium-binding protein is found in the basal body complexes (the functional homolog of the centrosome in animal cell). In mitotic cells it is specifically associated with the poles of the mitotic spindles at the sites of the duplicated basal body complexes. This is Caltractin from Spermatozopsis similis (Green alga).